Here is a 160-residue protein sequence, read N- to C-terminus: Cytochrome b6-f complex subunit 4 (160 aa).

The next 3 membrane-spanning stretches (helical) occupy residues 36 to 56 (LLYI…GLAV), 95 to 115 (LLGV…PFLE), and 131 to 151 (TIFL…ALPI).

Belongs to the cytochrome b family. PetD subfamily. In terms of assembly, the 4 large subunits of the cytochrome b6-f complex are cytochrome b6, subunit IV (17 kDa polypeptide, petD), cytochrome f and the Rieske protein, while the 4 small subunits are petG, petL, petM and petN. The complex functions as a dimer.

Its subcellular location is the plastid. It localises to the chloroplast thylakoid membrane. Functionally, component of the cytochrome b6-f complex, which mediates electron transfer between photosystem II (PSII) and photosystem I (PSI), cyclic electron flow around PSI, and state transitions. The polypeptide is Cytochrome b6-f complex subunit 4 (Anthoceros angustus (Hornwort)).